Consider the following 493-residue polypeptide: Glutamate--tRNA ligase (493 aa).

The 'HIGH' region motif lies at Pro10–Thr20. Positions Lys251 to Arg255 match the 'KMSKS' region motif. Lys254 lines the ATP pocket.

This sequence belongs to the class-I aminoacyl-tRNA synthetase family. Glutamate--tRNA ligase type 1 subfamily. In terms of assembly, monomer.

It is found in the cytoplasm. The catalysed reaction is tRNA(Glu) + L-glutamate + ATP = L-glutamyl-tRNA(Glu) + AMP + diphosphate. Catalyzes the attachment of glutamate to tRNA(Glu) in a two-step reaction: glutamate is first activated by ATP to form Glu-AMP and then transferred to the acceptor end of tRNA(Glu). The polypeptide is Glutamate--tRNA ligase (Pseudomonas entomophila (strain L48)).